A 351-amino-acid polypeptide reads, in one-letter code: MSITIKLGQLAEFLGATLRGDKDKDITGLAALQEAGPGQISFLAKSQYRKFLVDAQAAAVLLKPADADSYTGDALLVPDPYLAYARISHFFDPKPKGVAGVHPTAVIADDAQVDPAASIGAFVVIESGARIAAGVTIGAHSFIGARCEIGEGGWLAPRVTLYHDVRIGKHVVIQSGAVLGGEGFGFANEKGVWQKIAQIGGVTLGDDVEVGVNTAIDRGALADTRIGNGVKLDNQIQIAHNVQVGDHTAMAACVGISGSTKIGKHCMLAGGVGLVGHIDICDGVYITGMTMVTHSITEPGSYSSGTAMQPAAEWRKSAARLRKIDDMARRLQKLEKAVETVTCADNRSSDG.

The Proton acceptor role is filled by histidine 240.

This sequence belongs to the transferase hexapeptide repeat family. LpxD subfamily. As to quaternary structure, homotrimer.

The catalysed reaction is a UDP-3-O-[(3R)-3-hydroxyacyl]-alpha-D-glucosamine + a (3R)-hydroxyacyl-[ACP] = a UDP-2-N,3-O-bis[(3R)-3-hydroxyacyl]-alpha-D-glucosamine + holo-[ACP] + H(+). It functions in the pathway bacterial outer membrane biogenesis; LPS lipid A biosynthesis. In terms of biological role, catalyzes the N-acylation of UDP-3-O-acylglucosamine using 3-hydroxyacyl-ACP as the acyl donor. Is involved in the biosynthesis of lipid A, a phosphorylated glycolipid that anchors the lipopolysaccharide to the outer membrane of the cell. The chain is UDP-3-O-acylglucosamine N-acyltransferase from Pseudomonas savastanoi pv. phaseolicola (strain 1448A / Race 6) (Pseudomonas syringae pv. phaseolicola (strain 1448A / Race 6)).